We begin with the raw amino-acid sequence, 871 residues long: Pre-mRNA-processing factor 40 homolog B (871 aa).

WW domains follow at residues 92–125 and 133–166; these read GPPR…KPSV and LLSQ…RPKD. Lysine 148 bears the N6-acetyllysine mark. The tract at residues 171 to 277 is disordered; the sequence is EVLVKQEAAG…RSGLSWSNRE (107 aa). Residue lysine 175 forms a Glycyl lysine isopeptide (Lys-Gly) (interchain with G-Cter in SUMO2) linkage. Residues 182 to 191 are compositionally biased toward low complexity; it reads QQQQLPQTLQ. The segment covering 192–211 has biased composition (pro residues); it reads PQPPQPQPDPPPVPPGPTPV. 2 stretches are compositionally biased toward low complexity: residues 212 to 221 and 245 to 255; these read PTGLLEPEPG and EGPSSSGQHQP. 6 consecutive FF domains span residues 276-330, 340-397, 410-470, 490-550, 554-610, and 625-682; these read REKA…YKAQ, RLRA…VLFF, RRRN…HIRA, QRKN…YVEE, RFHD…LLEK, and RMRR…FLQV. The disordered stretch occupies residues 690–871; the sequence is HLHTKGRKHG…TLLQQLDDHQ (182 aa). Residues 691–711 show a composition bias toward basic residues; sequence LHTKGRKHGRKGKKHHHKRSH. Residues 739 to 756 show a composition bias toward low complexity; the sequence is SESGSEPSSSLDSVESGG. Serine 764 is modified (phosphoserine). The segment covering 777-793 has biased composition (basic residues); the sequence is RKAKKPKKKTKKRRHKS. A compositionally biased stretch (basic and acidic residues) spans 803–824; the sequence is EEKAGKESDEKEQEQDKDRELQ. Position 832 is a phosphoserine (serine 832). Lysine 838 participates in a covalent cross-link: Glycyl lysine isopeptide (Lys-Gly) (interchain with G-Cter in SUMO2). Position 852 is a phosphoserine (serine 852).

This sequence belongs to the PRPF40 family. As to quaternary structure, interacts with the N-terminus of HD. In terms of tissue distribution, expressed in the striatum and cortex of the brain (at protein level). Highly expressed in testis, fetal kidney and fetal brain. Moderately expressed in pancreas, skeletal muscle, placenta, brain and heart. Weakly expressed in colon, ileum, ovary, prostate, spleen, kidney and fetal lung.

It is found in the nucleus speckle. In terms of biological role, may be involved in pre-mRNA splicing. The protein is Pre-mRNA-processing factor 40 homolog B (PRPF40B) of Homo sapiens (Human).